A 546-amino-acid chain; its full sequence is Chaperonin GroEL (546 aa).

Residues 30-33 (TLGP), K51, 87-91 (DGTTT), G415, 479-481 (NAA), and D495 contribute to the ATP site. The tract at residues 526-546 (KEEKPDLSGAGAGMGGMGGMM) is disordered. Gly residues predominate over residues 535–546 (AGAGMGGMGGMM).

This sequence belongs to the chaperonin (HSP60) family. As to quaternary structure, forms a cylinder of 14 subunits composed of two heptameric rings stacked back-to-back. Interacts with the co-chaperonin GroES.

It localises to the cytoplasm. The catalysed reaction is ATP + H2O + a folded polypeptide = ADP + phosphate + an unfolded polypeptide.. Functionally, together with its co-chaperonin GroES, plays an essential role in assisting protein folding. The GroEL-GroES system forms a nano-cage that allows encapsulation of the non-native substrate proteins and provides a physical environment optimized to promote and accelerate protein folding. This chain is Chaperonin GroEL, found in Wigglesworthia glossinidia brevipalpis.